Here is a 318-residue protein sequence, read N- to C-terminus: Ankyrin repeat and SOCS box protein 7 (318 aa).

7 ANK repeats span residues 13–42, 46–75, 80–109, 116–145, 149–178, 180–208, and 213–242; these read QEELQIQAAVAAGDVHTVRKMLEQGYSPNG, NGWTLLHFSAARGKERCVRVFLEHGADPTV, GGFTALHYAAMHGRARIARLMLESEYRSDI, DGWTPLHVAAHYGRDSFVRLLLEFKAEVDP, KGTTPLQLAIIRERSSCVKILLDHNANIDI, NGFLLRYAVIKSNHSYCRMFLQRGADTNL, and DGQTPLHLSALRDDVLCARMLYNYGADTNT. Residues 265 to 318 enclose the SOCS box domain; sequence LDFLQDVTRQPRTLQDLCRIKIRQCIGLQNLKLLDELPIAKVMKDYLKHKFDDI.

This sequence belongs to the ankyrin SOCS box (ASB) family. In terms of assembly, interacts with CUL5. Interacts with RNF7. Interacts with PSRC1.

The protein resides in the nucleus. It localises to the cytoplasm. The protein operates within protein modification; protein ubiquitination. Probable substrate-recognition component of a SCF-like ECS (Elongin-Cullin-SOCS-box protein) E3 ubiquitin-protein ligase complex which mediates the ubiquitination and subsequent proteasomal degradation of target proteins. Plays a role in spindle dynamics and genome integrity by targeting the mitotic progression protein PSRC1 for proteasomal degradation in a cell cycle-dependent manner. Also participates in meiosis by mediating the proper attachment between kinetochores and microtubules. This is Ankyrin repeat and SOCS box protein 7 (Asb7) from Mus musculus (Mouse).